A 119-amino-acid chain; its full sequence is Methylglyoxal synthase (119 aa).

The MGS-like domain occupies 1 to 119; sequence MRIALIAHDK…GTADLIIRQF (119 aa). Substrate contacts are provided by residues His8, Lys12, 34 to 37, and 54 to 55; these read TGTT and SG. Asp60 (proton donor/acceptor) is an active-site residue. His87 is a binding site for substrate.

The protein belongs to the methylglyoxal synthase family.

The enzyme catalyses dihydroxyacetone phosphate = methylglyoxal + phosphate. In terms of biological role, catalyzes the formation of methylglyoxal from dihydroxyacetone phosphate. The sequence is that of Methylglyoxal synthase from Clostridium botulinum (strain Alaska E43 / Type E3).